A 514-amino-acid chain; its full sequence is MSVSKKPMVLVILDGYGYREEQQDNAILNAKTPVMDALWAKRPHTLIDASGLEVGLPDRQMGNSEVGHVNLGAGRIVYQDLTRLDVEIKERTFFANPVLTNAVDQAKNAGKAVHIMGLLSAGGVHSHEDHIMAMVELAAERGAEKIYLHAFLDGRDTPPRSAEASLKKFEDKFAAQGKGRVASIVGRYYAMDRDNRWDRVEKAYDLMTLAQGEFQADTAVAGLQAAYARDENDEFVKATVIRAEGQADAAMEDGDTLIFMNFRADRAREITRAFVNADFDGFARKKVVNLNFVMLTEYAADIKTTVAYPPASLANTFGEWMAKNDKTQLRISETEKYAHVTFFFNGGVEEPFAGEERILINSPKVATYDLQPEMSSAELTEKLVAAIESGKYDTIICNYPNGDMVGHTGVMEAAIKAVEALDNCIDQVTKAVESVGGQLLITADHGNAEQMRDPATGQAHTAHTNLPVPLIYVGEKNVKAVEGGKLSDIAPTMLSLMGMEIPQEMTGKPLFIVE.

Residues aspartate 14 and serine 64 each coordinate Mn(2+). Serine 64 acts as the Phosphoserine intermediate in catalysis. Substrate-binding positions include histidine 125, 155–156 (RD), arginine 187, arginine 193, 263–266 (RADR), and lysine 336. Residues aspartate 403, histidine 407, aspartate 444, histidine 445, and histidine 463 each contribute to the Mn(2+) site.

The protein belongs to the BPG-independent phosphoglycerate mutase family. Monomer. It depends on Mn(2+) as a cofactor.

It carries out the reaction (2R)-2-phosphoglycerate = (2R)-3-phosphoglycerate. The protein operates within carbohydrate degradation; glycolysis; pyruvate from D-glyceraldehyde 3-phosphate: step 3/5. Functionally, catalyzes the interconversion of 2-phosphoglycerate and 3-phosphoglycerate. This chain is 2,3-bisphosphoglycerate-independent phosphoglycerate mutase, found in Salmonella choleraesuis (strain SC-B67).